A 144-amino-acid polypeptide reads, in one-letter code: NADH dehydrogenase [ubiquinone] 1 alpha subcomplex subunit 13 (144 aa).

Ala-2 bears the N-acetylalanine mark. Residues 30–51 (LSGYSMFAVGIGALIFGYWRMM) traverse the membrane as a helical segment.

It belongs to the complex I NDUFA13 subunit family. Complex I is composed of 45 different subunits. Interacts with CARD15, but not with CARD4. Interacts with STAT3, but not with STAT1, STAT2 and STAT5A. Interacts with OLFM4.

The protein localises to the mitochondrion inner membrane. The protein resides in the nucleus. In terms of biological role, accessory subunit of the mitochondrial membrane respiratory chain NADH dehydrogenase (Complex I), that is believed not to be involved in catalysis. Complex I functions in the transfer of electrons from NADH to the respiratory chain. The immediate electron acceptor for the enzyme is believed to be ubiquinone. Involved in the interferon/all-trans-retinoic acid (IFN/RA) induced cell death. This apoptotic activity is inhibited by interaction with viral IRF1. Prevents the transactivation of STAT3 target genes. May play a role in CARD15-mediated innate mucosal responses and serve to regulate intestinal epithelial cell responses to microbes. This is NADH dehydrogenase [ubiquinone] 1 alpha subcomplex subunit 13 (Ndufa13) from Mus musculus (Mouse).